The primary structure comprises 343 residues: tRNA N6-adenosine threonylcarbamoyltransferase (343 aa).

Fe cation contacts are provided by His-115 and His-119. Residues 137–141 (IVSGG), Asp-170, Gly-183, Asp-187, and Asn-276 contribute to the substrate site. Asp-304 contributes to the Fe cation binding site.

The protein belongs to the KAE1 / TsaD family. Fe(2+) is required as a cofactor.

The protein localises to the cytoplasm. The catalysed reaction is L-threonylcarbamoyladenylate + adenosine(37) in tRNA = N(6)-L-threonylcarbamoyladenosine(37) in tRNA + AMP + H(+). Its function is as follows. Required for the formation of a threonylcarbamoyl group on adenosine at position 37 (t(6)A37) in tRNAs that read codons beginning with adenine. Is involved in the transfer of the threonylcarbamoyl moiety of threonylcarbamoyl-AMP (TC-AMP) to the N6 group of A37, together with TsaE and TsaB. TsaD likely plays a direct catalytic role in this reaction. The chain is tRNA N6-adenosine threonylcarbamoyltransferase from Staphylococcus carnosus (strain TM300).